A 117-amino-acid polypeptide reads, in one-letter code: MPRPYKCRRISEIPKVAYYKPAGIPLSMLEENQLSTEEAEALRLKDLLGLEQAQAALQMNISRPTFQRMLYSARYKVADALLNGKALRIEGGVFEIDARPCCQRQTPPCQPDPPEQT.

The protein belongs to the UPF0251 family.

In Dehalococcoides mccartyi (strain CBDB1), this protein is UPF0251 protein cbdbA217.